Here is a 307-residue protein sequence, read N- to C-terminus: Probable protein S-acyltransferase 14 (307 aa).

The next 2 membrane-spanning stretches (helical) occupy residues 22 to 42 (LGSI…YAVV) and 63 to 83 (ILIL…SVVF). The DHHC domain maps to 127–177 (RFCRKCNQLKPSRCHHCSVCGRCVLKMDHHCVWVVNCVGALNYKYFLLFLF). Residue cysteine 157 is the S-palmitoyl cysteine intermediate of the active site. 2 consecutive transmembrane segments (helical) span residues 171 to 191 (YFLL…LVLM) and 213 to 233 (TFLA…FLIM).

This sequence belongs to the DHHC palmitoyltransferase family.

The protein localises to the golgi apparatus. It localises to the trans-Golgi network membrane. The enzyme catalyses L-cysteinyl-[protein] + hexadecanoyl-CoA = S-hexadecanoyl-L-cysteinyl-[protein] + CoA. Functionally, palmitoyl acyltransferase. The polypeptide is Probable protein S-acyltransferase 14 (PAT14) (Arabidopsis thaliana (Mouse-ear cress)).